Here is a 594-residue protein sequence, read N- to C-terminus: KIF-binding protein (594 aa).

The protein belongs to the KIF-binding protein family.

It localises to the cytoplasm. It is found in the cytoskeleton. Functionally, activator of KIF1B plus-end-directed microtubule motor activity. Required for organization of axonal microtubules, and axonal outgrowth and maintenance during peripheral and central nervous system development. The chain is KIF-binding protein (Kifbp) from Gallus gallus (Chicken).